We begin with the raw amino-acid sequence, 73 residues long: Toxin Td4 (73 aa).

The N-terminal stretch at 1–7 (IGMVVEC) is a signal peptide. The LCN-type CS-alpha/beta domain occupies 8–70 (KDGYLVGNDG…TWDRATNRCG (63 aa)). Disulfide bonds link C18-C69, C22-C44, C30-C50, and C34-C52. At R71 the chain carries Arginine amide.

This sequence belongs to the long (4 C-C) scorpion toxin superfamily. Sodium channel inhibitor family. Beta subfamily. In terms of tissue distribution, expressed by the venom gland.

It localises to the secreted. Its function is as follows. Beta toxins bind voltage-independently at site-4 of sodium channels (Nav) and shift the voltage of activation toward more negative potentials thereby affecting sodium channel activation and promoting spontaneous and repetitive firing. This is Toxin Td4 from Tityus discrepans (Venezuelan scorpion).